We begin with the raw amino-acid sequence, 227 residues long: 7-cyano-7-deazaguanine synthase (227 aa).

8–18 contributes to the ATP binding site; that stretch reads FSGGQDSTTCL. Residues cysteine 187, cysteine 196, cysteine 199, and cysteine 202 each coordinate Zn(2+).

Belongs to the QueC family. The cofactor is Zn(2+).

It carries out the reaction 7-carboxy-7-deazaguanine + NH4(+) + ATP = 7-cyano-7-deazaguanine + ADP + phosphate + H2O + H(+). It participates in purine metabolism; 7-cyano-7-deazaguanine biosynthesis. In terms of biological role, catalyzes the ATP-dependent conversion of 7-carboxy-7-deazaguanine (CDG) to 7-cyano-7-deazaguanine (preQ(0)). This is 7-cyano-7-deazaguanine synthase from Aliivibrio fischeri (strain MJ11) (Vibrio fischeri).